Reading from the N-terminus, the 514-residue chain is Sugar transport protein 11 (514 aa).

Residues 1 to 19 (MAGGAFIDESGHGGDYEGR) are Cytoplasmic-facing. A helical membrane pass occupies residues 20 to 40 (VTAFVMITCIVAAMGGLLFGY). The Extracellular portion of the chain corresponds to 41–82 (DIGISGGVISMEDFLTKFFPDVLRQMQNKRGRETEYCKYDNE). The helical transmembrane segment at 83 to 103 (LLTLFTSSLYLAALFASFLAS) threads the bilayer. Topologically, residues 104-112 (TITRLFGRK) are cytoplasmic. Residues 113–133 (VSMVIGSLAFLSGALLNGLAI) traverse the membrane as a helical segment. At 134 to 137 (NLEM) the chain is on the extracellular side. The chain crosses the membrane as a helical span at residues 138 to 158 (LIIGRLFLGVGVGFANQSVPL). At 159 to 169 (YLSEMAPAKIR) the chain is on the cytoplasmic side. A helical membrane pass occupies residues 170 to 190 (GALNIGFQLAITIGILAANIV). Over 191-204 (NYVTPKLQNGIGWR) the chain is Extracellular. A helical membrane pass occupies residues 205–225 (LSLGLAGVPAVMMLVGCFFLP). Over 226 to 290 (DTPNSILERG…RYRPQLTFCT (65 aa)) the chain is Cytoplasmic. The chain crosses the membrane as a helical span at residues 291–311 (FIPFFQQLTGINVIMFYAPVL). Over 312–320 (FKTIGFGND) the chain is Extracellular. A helical transmembrane segment spans residues 321-341 (ASLISAVITGLVNVLSTIVSI). Residues 342–350 (YSVDKFGRR) lie on the Cytoplasmic side of the membrane. The helical transmembrane segment at 351-371 (ALFLQGGFQMIVTQIAVGSMI) threads the bilayer. The Extracellular portion of the chain corresponds to 372 to 389 (GWKFGFNGEGNLSGVDAD). A helical membrane pass occupies residues 390–410 (IILALICLYVAGFAWSWGPLG). Topologically, residues 411 to 428 (WLVPSEICPLEIRSAGQS) are cytoplasmic. A helical transmembrane segment spans residues 429–449 (LNVSVNMFFTFFIGQFFLTML). Residues 450-453 (CHMK) lie on the Extracellular side of the membrane. The helical transmembrane segment at 454–474 (FGLFYFFAGMVLIMTIFIYFL) threads the bilayer. At 475–514 (LPETKGVPIEEMGKVWKEHRYWGKYSNNDDGDDVDDDAYF) the chain is on the cytoplasmic side.

The protein belongs to the major facilitator superfamily. Sugar transporter (TC 2.A.1.1) family. Specifically expressed in germinating pollen and pollen tube (at protein level).

The protein resides in the cell membrane. With respect to regulation, inhibited by uncouplers such as 2,4-dinitrophenol and carbonyl cyanide-m-chlorophenyl-hydrazone. In terms of biological role, mediates an active uptake of hexoses, probably by sugar/hydrogen symport. Can transport glucose, galactose, mannose, xylose and 3-O-methylglucose, but not fructose and ribose. The sequence is that of Sugar transport protein 11 (STP11) from Arabidopsis thaliana (Mouse-ear cress).